A 250-amino-acid chain; its full sequence is Kallikrein-9 (250 aa).

The signal sequence occupies residues 1 to 15; it reads MKLGLLCALLSLLAG. The region spanning 23 to 249 is the Peptidase S1 domain; it reads AIGAEECRPN…YLDWIQEIME (227 aa). 6 disulfides stabilise this stretch: Cys29-Cys164, Cys48-Cys64, Cys136-Cys238, Cys143-Cys210, Cys175-Cys189, and Cys200-Cys225. Active-site charge relay system residues include His63 and Asp111. Residues Asn131 and Asn166 are each glycosylated (N-linked (GlcNAc...) asparagine). Ser204 functions as the Charge relay system in the catalytic mechanism. Asn211 carries N-linked (GlcNAc...) asparagine glycosylation.

The protein belongs to the peptidase S1 family. Kallikrein subfamily. In terms of tissue distribution, skin, thymus, trachea, cerebellum and spinal cord.

Its subcellular location is the secreted. The polypeptide is Kallikrein-9 (KLK9) (Homo sapiens (Human)).